The chain runs to 127 residues: PRA1 family protein C (127 aa).

The next 3 membrane-spanning stretches (helical) occupy residues 15 to 35, 53 to 73, and 76 to 96; these read IFISMLWQPVHLSVFVILIVA, VIDDSTLVLVLLVLTIGIFLL, and VSRGIVIGVLAGLPVVLVHGM.

Belongs to the PRA1 family.

It is found in the endoplasmic reticulum membrane. Functionally, may be involved in both secretory and endocytic intracellular trafficking in the endosomal/prevacuolar compartments. The protein is PRA1 family protein C (PRA1C) of Arabidopsis thaliana (Mouse-ear cress).